The following is a 475-amino-acid chain: Homeobox even-skipped homolog protein 2 (475 aa).

Disordered regions lie at residues 82–113 (PSSESTVSSEIASATESRKKPSHYSEAAAEAD) and 155–189 (TSASGSGLGSLHGGGGGGNSGAAALGGSGSGSGAD). The span at 83 to 96 (SSESTVSSEIASAT) shows a compositional bias: low complexity. Gly residues predominate over residues 160 to 186 (SGLGSLHGGGGGGNSGAAALGGSGSGS). A DNA-binding region (homeobox) is located at residues 191–250 (VRRYRTAFTREQIARLEKEFYRENYVSRPRRCELAAALNLPETTIKVWFQNRRMKDKRQR).

This sequence belongs to the even-skipped homeobox family.

It is found in the nucleus. The chain is Homeobox even-skipped homolog protein 2 (Evx2) from Mus musculus (Mouse).